A 427-amino-acid chain; its full sequence is Transcobalamin-2 (427 aa).

Positions 1 to 18 (MRHLGAFLFLLGVLGALT) are cleaved as a signal peptide. Cystine bridges form between cysteine 21–cysteine 267, cysteine 83–cysteine 96, cysteine 116–cysteine 309, and cysteine 165–cysteine 205. Cob(II)alamin-binding positions include glutamine 104, 152–156 (TSYYQ), histidine 190, 190–194 (HHSVD), asparagine 242, serine 245, glutamine 291, and 395–397 (WQL).

This sequence belongs to the eukaryotic cobalamin transport proteins family. Interacts with CD320 (via LDL-receptor class A domains).

It is found in the secreted. In terms of biological role, primary vitamin B12-binding and transport protein. Delivers cobalamin to cells. In Homo sapiens (Human), this protein is Transcobalamin-2 (TCN2).